We begin with the raw amino-acid sequence, 35 residues long: Alpha-amanitin proprotein (35 aa).

Positions 1 to 10 are excised as a propeptide; sequence MSDINATRLP. At Ile11 the chain carries (3R,4R)-4,5-dihydroxyisoleucine; in form alpha-amanitin. Ile11 is modified ((3R,4S)-4-hydroxyisoleucine; in form gamma-amanitin). Residues 11–18 constitute a cross-link (cyclopeptide (Ile-Pro)); sequence IWGIGCNP. A cross-link (2'-cysteinyl-6'-hydroxytryptophan sulfoxide (Trp-Cys)) is located at residues 12–16; sequence WGIGC. At Pro18 the chain carries 4-hydroxyproline. The propeptide occupies 19–35; that stretch reads CVGDDVTTLLTRGEALC.

The protein belongs to the MSDIN fungal toxin family. In terms of processing, processed by the macrocyclase-peptidase enzyme POPB to yield a toxic cyclic decapeptide. POPB first removes 10 residues from the N-terminus. Conformational trapping of the remaining peptide forces the enzyme to release this intermediate rather than proceed to macrocyclization. The enzyme rebinds the remaining peptide in a different conformation and catalyzes macrocyclization of the N-terminal 8 residues.

Functionally, major toxin belonging to the bicyclic octapeptides amatoxins that acts by binding non-competitively to RNA polymerase II and greatly slowing the elongation of transcripts from target promoters. The polypeptide is Alpha-amanitin proprotein (Amanita bisporigera (Destroying angel)).